Consider the following 145-residue polypeptide: 3-hydroxyacyl-[acyl-carrier-protein] dehydratase FabZ (145 aa).

His-48 is a catalytic residue.

Belongs to the thioester dehydratase family. FabZ subfamily.

It localises to the cytoplasm. It carries out the reaction a (3R)-hydroxyacyl-[ACP] = a (2E)-enoyl-[ACP] + H2O. Functionally, involved in unsaturated fatty acids biosynthesis. Catalyzes the dehydration of short chain beta-hydroxyacyl-ACPs and long chain saturated and unsaturated beta-hydroxyacyl-ACPs. The polypeptide is 3-hydroxyacyl-[acyl-carrier-protein] dehydratase FabZ (Campylobacter hominis (strain ATCC BAA-381 / DSM 21671 / CCUG 45161 / LMG 19568 / NCTC 13146 / CH001A)).